The following is a 592-amino-acid chain: Catabolite repression protein creC (592 aa).

The tract at residues Asn-119 to Ile-140 is disordered. WD repeat units follow at residues Ile-248–Ile-288, Leu-327–Arg-368, Ser-369–Arg-408, and Gly-411–Pro-455. 2 disordered regions span residues His-459–Glu-513 and Trp-556–Leu-592. Composition is skewed to polar residues over residues Ser-484 to Asp-499 and Ser-564 to Leu-576. The stretch at Val-529–Asn-566 is one WD 5 repeat.

Belongs to the WD repeat creC family. Interacts with creB.

Its function is as follows. Component of the regulatory network controlling carbon source utilization through ubiquitination and deubiquitination involving creA, creB, creC, creD and acrB. Required to prevent the proteolysis of the CreB deubiquitinating enzyme in the absence of carbon catabolite repression. CreB deubiquitinating enzyme stabilized in a complex with the CreC leads to the expression of genes such as those in the proline and quinate pathways. The protein is Catabolite repression protein creC (creC) of Emericella nidulans (strain FGSC A4 / ATCC 38163 / CBS 112.46 / NRRL 194 / M139) (Aspergillus nidulans).